The following is a 590-amino-acid chain: uncharacterized protein (590 aa).

Residues 1-68 (MKFSKPKFSM…SQRVWGPWNY (68 aa)) are Cytoplasmic-facing. The helical transmembrane segment at 69 to 89 (VAFWLADSVNVNTWMIAGTAV) threads the bilayer. The Extracellular segment spans residues 90–94 (ESGLS). Residues 95–115 (WWEAWITVWVGYTIAAFILTI) form a helical membrane-spanning segment. The Cytoplasmic portion of the chain corresponds to 116-124 (AGRAGAVYH). A helical membrane pass occupies residues 125-145 (ISFPVLSRSSFGIWGSLWPIL). The Extracellular portion of the chain corresponds to 146–149 (NRAV). Residues 150 to 170 (MACVWYGVQAWIGGECVTLMI) traverse the membrane as a helical segment. Over 171–194 (RSIWPSFSHIPNTMAKSGTETYQW) the chain is Cytoplasmic. Residues 195–215 (VGFFIFWLISNVAIWFPVYQI) traverse the membrane as a helical segment. Residues 216 to 218 (RHL) are Extracellular-facing. The helical transmembrane segment at 219-239 (FTAKSFLAPPAAIAFLIWALV) threads the bilayer. Over 240 to 258 (KAHGAGDAIHAKTQLSTWN) the chain is Cytoplasmic. A helical membrane pass occupies residues 259–279 (HGWAVTAGIISCLDNFATLIV). Topologically, residues 280-298 (NNPDFTRFATTPNAPIFPQ) are extracellular. Residues 299 to 319 (LITIPMGFGITTLIGVLVGSA) traverse the membrane as a helical segment. Over 320–390 (SKSIYGENIW…LCPMFINIRR (71 aa)) the chain is Cytoplasmic. Residues 391–411 (GGYIASIIGICMCPWNLLSSS) form a helical membrane-spanning segment. The Extracellular segment spans residues 412–418 (NSFANSL). A helical transmembrane segment spans residues 419–439 (SAYAVFLSSFAGILIADYFVI). Topologically, residues 440–467 (RKGYLKVDALYTINPNEPYWFTYGINLR) are cytoplasmic. A helical transmembrane segment spans residues 468-488 (AFASYICGLLINVVGLAGAVG). The Extracellular segment spans residues 489-500 (DKVPKAALTMNN). A helical transmembrane segment spans residues 501-521 (IAYLLGIVTSFLSHLIICKIF). Residues 522-590 (PVTACGEKFL…GIDIKESSVF (69 aa)) lie on the Cytoplasmic side of the membrane. The interval 566 to 590 (VSYDSKEKSDDGKSGGIDIKESSVF) is disordered.

This sequence belongs to the purine-cytosine permease (2.A.39) family.

Its subcellular location is the cytoplasm. It localises to the nucleus. The protein localises to the membrane. This is an uncharacterized protein from Schizosaccharomyces pombe (strain 972 / ATCC 24843) (Fission yeast).